Reading from the N-terminus, the 313-residue chain is Carbamate kinase 2 (313 aa).

This sequence belongs to the carbamate kinase family.

It is found in the cytoplasm. It catalyses the reaction hydrogencarbonate + NH4(+) + ATP = carbamoyl phosphate + ADP + H2O + H(+). Its pathway is metabolic intermediate metabolism; carbamoyl phosphate degradation; CO(2) and NH(3) from carbamoyl phosphate: step 1/1. The sequence is that of Carbamate kinase 2 (arcC2) from Staphylococcus aureus (strain Mu50 / ATCC 700699).